A 262-amino-acid polypeptide reads, in one-letter code: Cyclin-dependent kinase inhibitor 1 (262 aa).

The tract at residues 140-212 (SDVAEAGSEH…SAQQATRPKI (73 aa)) is disordered. Residues 160–169 (SGRDRERRET) are compositionally biased toward basic and acidic residues. Over residues 198 to 208 (SAATASAQQAT) the composition is skewed to low complexity.

The protein belongs to the CDI family. ICK/KRP subfamily.

In Oryza sativa subsp. indica (Rice), this protein is Cyclin-dependent kinase inhibitor 1 (KRP1).